Here is a 341-residue protein sequence, read N- to C-terminus: Putative amino-acid ABC transporter-binding protein YhdW (341 aa).

Residues 1–19 form the signal peptide; it reads MKKMMIATLAAASVLLAVA.

The protein belongs to the bacterial solute-binding protein 3 family.

It localises to the periplasm. Its function is as follows. Probably part of the binding-protein-dependent transport system YdhWXYZ for an amino acid. This is Putative amino-acid ABC transporter-binding protein YhdW (yhdW) from Escherichia coli O157:H7.